A 251-amino-acid chain; its full sequence is 3-deoxy-manno-octulosonate cytidylyltransferase (251 aa).

It belongs to the KdsB family.

It is found in the cytoplasm. It carries out the reaction 3-deoxy-alpha-D-manno-oct-2-ulosonate + CTP = CMP-3-deoxy-beta-D-manno-octulosonate + diphosphate. Its pathway is nucleotide-sugar biosynthesis; CMP-3-deoxy-D-manno-octulosonate biosynthesis; CMP-3-deoxy-D-manno-octulosonate from 3-deoxy-D-manno-octulosonate and CTP: step 1/1. It participates in bacterial outer membrane biogenesis; lipopolysaccharide biosynthesis. In terms of biological role, activates KDO (a required 8-carbon sugar) for incorporation into bacterial lipopolysaccharide in Gram-negative bacteria. The protein is 3-deoxy-manno-octulosonate cytidylyltransferase of Agrobacterium fabrum (strain C58 / ATCC 33970) (Agrobacterium tumefaciens (strain C58)).